We begin with the raw amino-acid sequence, 329 residues long: Peroxidase 30 (329 aa).

The first 27 residues, 1–27, serve as a signal peptide directing secretion; that stretch reads MKTMTQLNIAVVVVVTVLIGMLRSSEA. Intrachain disulfides connect Cys-38/Cys-116, Cys-71/Cys-76, Cys-122/Cys-324, and Cys-201/Cys-234. The Proton acceptor role is filled by His-69. 5 residues coordinate Ca(2+): Asp-70, Val-73, Gly-75, Asp-77, and Ser-79. Residues Asn-83 and Asn-155 are each glycosylated (N-linked (GlcNAc...) asparagine). Residues 141 to 165 are disordered; the sequence is SWSVPTGRRDGRISNKTEATNNIPP. Residues 156–165 are compositionally biased toward polar residues; that stretch reads KTEATNNIPP. Pro-164 contacts substrate. The N-linked (GlcNAc...) asparagine glycan is linked to Asn-169. His-194 lines the heme b pocket. Position 195 (Thr-195) interacts with Ca(2+). 2 N-linked (GlcNAc...) asparagine glycosylation sites follow: Asn-210 and Asn-240. Ca(2+) is bound by residues Asp-247, Ser-250, and Asp-255. Residue Asn-290 is glycosylated (N-linked (GlcNAc...) asparagine).

It belongs to the peroxidase family. Classical plant (class III) peroxidase subfamily. Heme b is required as a cofactor. Requires Ca(2+) as cofactor. As to expression, mainly expressed in roots.

The protein localises to the secreted. The catalysed reaction is 2 a phenolic donor + H2O2 = 2 a phenolic radical donor + 2 H2O. Removal of H(2)O(2), oxidation of toxic reductants, biosynthesis and degradation of lignin, suberization, auxin catabolism, response to environmental stresses such as wounding, pathogen attack and oxidative stress. These functions might be dependent on each isozyme/isoform in each plant tissue. In Arabidopsis thaliana (Mouse-ear cress), this protein is Peroxidase 30 (PER30).